Here is a 51-residue protein sequence, read N- to C-terminus: Large ribosomal subunit protein eL39 (51 aa).

Belongs to the eukaryotic ribosomal protein eL39 family.

The polypeptide is Large ribosomal subunit protein eL39 (Picrophilus torridus (strain ATCC 700027 / DSM 9790 / JCM 10055 / NBRC 100828 / KAW 2/3)).